The following is a 116-amino-acid chain: Acyl-CoA-binding protein homolog 3 (116 aa).

Residues 3–92 (LQEKFDAAVE…LNDMFDKIAE (90 aa)) form the ACB domain. Residues 34–38 (YSLFK), Lys-60, and Tyr-79 contribute to the an acyl-CoA site.

Belongs to the ACBP family.

Binds medium- and long-chain acyl-CoA esters with very high affinity and may function as an intracellular carrier of acyl-CoA esters. This Caenorhabditis elegans protein is Acyl-CoA-binding protein homolog 3 (acbp-3).